The sequence spans 187 residues: Peptidyl-tRNA hydrolase (187 aa).

His-14 lines the tRNA pocket. His-19 serves as the catalytic Proton acceptor. Residues Tyr-62, Asn-64, and Asn-110 each coordinate tRNA.

This sequence belongs to the PTH family. Monomer.

It localises to the cytoplasm. It carries out the reaction an N-acyl-L-alpha-aminoacyl-tRNA + H2O = an N-acyl-L-amino acid + a tRNA + H(+). Functionally, hydrolyzes ribosome-free peptidyl-tRNAs (with 1 or more amino acids incorporated), which drop off the ribosome during protein synthesis, or as a result of ribosome stalling. In terms of biological role, catalyzes the release of premature peptidyl moieties from peptidyl-tRNA molecules trapped in stalled 50S ribosomal subunits, and thus maintains levels of free tRNAs and 50S ribosomes. This Chlorobaculum tepidum (strain ATCC 49652 / DSM 12025 / NBRC 103806 / TLS) (Chlorobium tepidum) protein is Peptidyl-tRNA hydrolase.